We begin with the raw amino-acid sequence, 778 residues long: Aerobic respiration control sensor protein ArcB (778 aa).

Residues 1–25 (MKQIRLLAQYYVDLMMKLGLVRFSM) lie on the Cytoplasmic side of the membrane. The helical transmembrane segment at 26–46 (LLALALVVLAIVVQMAVTMVL) threads the bilayer. At 47 to 57 (HGQVESIDVIR) the chain is on the periplasmic side. Residues 58-78 (SIFFGLLITPWAVYFLSVVVE) traverse the membrane as a helical segment. Over 79–778 (QLEESRQRLS…KAWVAKATKK (700 aa)) the chain is Cytoplasmic. The PAS domain maps to 153-223 (QSSFLRSFLD…ETDEKVFRHN (71 aa)). Residues 226-278 (LTYEQWLDYPDGRKACFEIRKVPYYDRVGKRHGLMGFGRDITERKRYQDALER) enclose the PAC domain. Positions 289–507 (TISHELRTPL…TFTLTIHAPS (219 aa)) constitute a Histidine kinase domain. The residue at position 292 (His292) is a Phosphohistidine; by autocatalysis. The Response regulatory domain maps to 527 to 643 (NVLLVEDIEL…ALTAMIKKFW (117 aa)). Position 576 is a 4-aspartylphosphate (Asp576). The HPt domain maps to 678 to 771 (GPKLITDGLA…RHDVEVLKAW (94 aa)). The residue at position 717 (His717) is a Phosphohistidine.

In terms of processing, activation requires a sequential transfer of a phosphate group from a His in the primary transmitter domain, to an Asp in the receiver domain and to a His in the secondary transmitter domain.

It is found in the cell inner membrane. The enzyme catalyses ATP + protein L-histidine = ADP + protein N-phospho-L-histidine.. Functionally, member of the two-component regulatory system ArcB/ArcA. Sensor-regulator protein for anaerobic repression of the arc modulon. Activates ArcA via a four-step phosphorelay. ArcB can also dephosphorylate ArcA by a reverse phosphorelay involving His-717 and Asp-576. The polypeptide is Aerobic respiration control sensor protein ArcB (arcB) (Escherichia coli O157:H7).